Here is a 424-residue protein sequence, read N- to C-terminus: DUF21 domain-containing protein At4g33700 (424 aa).

Over 1–11 (MAVEYVCCSPN) the chain is Extracellular. The 184-residue stretch at 8–191 (CSPNFFIHIA…GKGGELTHDE (184 aa)) folds into the CNNM transmembrane domain. The helical transmembrane segment at 12–32 (FFIHIAVIVFLVLFAGLMSGL) threads the bilayer. Residues 33 to 70 (TLGLMSLSLVDLEVLAKSGTPEHRKYAAKILPVVKNQH) lie on the Cytoplasmic side of the membrane. A helical transmembrane segment spans residues 71–91 (LLLVTLLICNAAAMETLPIFL). The Extracellular segment spans residues 92–94 (DGL). A helical membrane pass occupies residues 95 to 115 (VTAWGAILISVTLILLFGEII). Residues 116–136 (PQSICSRYGLAIGATVAPFVR) are Cytoplasmic-facing. A helical membrane pass occupies residues 137–157 (VLVFICLPVAWPISKLLDFLL). Residues 158 to 424 (GHRRAALFRR…DETDHHFEDS (267 aa)) lie on the Extracellular side of the membrane. The 62-residue stretch at 210-271 (MTPISDIFVI…TINPDEEIPV (62 aa)) folds into the CBS 1 domain. 2 N-linked (GlcNAc...) asparagine glycosylation sites follow: Asn273 and Asn319. 2 consecutive CBS domains span residues 275-331 (TIRR…DVDS) and 355-416 (PNRA…IFDE). Disordered stretches follow at residues 321 to 340 (SVKEARVDVDSEGTPTPQER) and 355 to 374 (PNRASSFKGGSKSKKWSKDN). Position 331 is a phosphoserine (Ser331).

It is found in the membrane. The sequence is that of DUF21 domain-containing protein At4g33700 (CBSDUF6) from Arabidopsis thaliana (Mouse-ear cress).